We begin with the raw amino-acid sequence, 478 residues long: Histidine--tRNA ligase (478 aa).

Belongs to the class-II aminoacyl-tRNA synthetase family. Homodimer.

It is found in the cytoplasm. The enzyme catalyses tRNA(His) + L-histidine + ATP = L-histidyl-tRNA(His) + AMP + diphosphate + H(+). This is Histidine--tRNA ligase (hisS) from Xanthomonas axonopodis pv. citri (strain 306).